Consider the following 183-residue polypeptide: Peptidyl-tRNA hydrolase (183 aa).

Residue Y14 coordinates tRNA. H19 serves as the catalytic Proton acceptor. TRNA is bound by residues F64 and N66.

The protein belongs to the PTH family. Monomer.

The protein localises to the cytoplasm. It catalyses the reaction an N-acyl-L-alpha-aminoacyl-tRNA + H2O = an N-acyl-L-amino acid + a tRNA + H(+). Functionally, hydrolyzes ribosome-free peptidyl-tRNAs (with 1 or more amino acids incorporated), which drop off the ribosome during protein synthesis, or as a result of ribosome stalling. In terms of biological role, catalyzes the release of premature peptidyl moieties from peptidyl-tRNA molecules trapped in stalled 50S ribosomal subunits, and thus maintains levels of free tRNAs and 50S ribosomes. In Syntrophomonas wolfei subsp. wolfei (strain DSM 2245B / Goettingen), this protein is Peptidyl-tRNA hydrolase.